The primary structure comprises 679 residues: Penicillin-binding protein 1A (679 aa).

Over residues 1-14 the composition is skewed to basic residues; sequence MTERKREHKDRKQN. Residues 1–20 form a disordered region; it reads MTERKREHKDRKQNKNSPKN. At 1 to 30 the chain is on the cytoplasmic side; that stretch reads MTERKREHKDRKQNKNSPKNQSKVTKFLKW. A helical; Signal-anchor for type II membrane protein transmembrane segment spans residues 31-51; the sequence is FFIGILLLGITAVTVVGIYVL. The Extracellular portion of the chain corresponds to 52–679; it reads SIIRSSPELD…QYKEVDNLVE (628 aa). Residues 72–244 are transglycosylase; the sequence is SILYDDQGNF…PTSYDGLSEA (173 aa). The Proton donor; for transglycosylase activity role is filled by Glu111. A transpeptidase region spans residues 378-663; it reads ASATIIDYKT…TSPIFGKIMG (286 aa). The active-site Acyl-ester intermediate; for transpeptidase activity is the Ser417.

It in the N-terminal section; belongs to the glycosyltransferase 51 family. In the C-terminal section; belongs to the transpeptidase family.

The protein localises to the cell membrane. The catalysed reaction is [GlcNAc-(1-&gt;4)-Mur2Ac(oyl-L-Ala-gamma-D-Glu-L-Lys-D-Ala-D-Ala)](n)-di-trans,octa-cis-undecaprenyl diphosphate + beta-D-GlcNAc-(1-&gt;4)-Mur2Ac(oyl-L-Ala-gamma-D-Glu-L-Lys-D-Ala-D-Ala)-di-trans,octa-cis-undecaprenyl diphosphate = [GlcNAc-(1-&gt;4)-Mur2Ac(oyl-L-Ala-gamma-D-Glu-L-Lys-D-Ala-D-Ala)](n+1)-di-trans,octa-cis-undecaprenyl diphosphate + di-trans,octa-cis-undecaprenyl diphosphate + H(+). The enzyme catalyses Preferential cleavage: (Ac)2-L-Lys-D-Ala-|-D-Ala. Also transpeptidation of peptidyl-alanyl moieties that are N-acyl substituents of D-alanine.. It participates in cell wall biogenesis; peptidoglycan biosynthesis. In terms of biological role, cell wall formation. Synthesis of cross-linked peptidoglycan from the lipid intermediates. The enzyme has a penicillin-insensitive transglycosylase N-terminal domain (formation of linear glycan strands) and a penicillin-sensitive transpeptidase C-terminal domain (cross-linking of the peptide subunits). This Clostridium perfringens (strain 13 / Type A) protein is Penicillin-binding protein 1A (pbpA).